Consider the following 155-residue polypeptide: Ciliary microtubule inner protein 2C (155 aa).

The protein belongs to the CIMIP2 family.

It localises to the cytoplasm. The protein localises to the cytoskeleton. It is found in the cilium axoneme. Its function is as follows. Microtubule inner protein (MIP) part of the dynein-decorated doublet microtubules (DMTs) in cilia axoneme, which is required for motile cilia beating. The chain is Ciliary microtubule inner protein 2C (cimip2c) from Xenopus tropicalis (Western clawed frog).